Consider the following 401-residue polypeptide: Tumor necrosis factor receptor superfamily member 11B (401 aa).

Residues 1-21 form the signal peptide; sequence MNNLLCCALVFLDISIKWTTQ. 4 TNFR-Cys repeats span residues 24-62, 65-105, 107-142, and 145-185; these read FPPK…KTVC, CPDH…NRVC, CKEG…NTVC, and CPDG…DNIC. Cystine bridges form between C41-C54, C44-C62, C65-C80, C83-C97, C87-C105, C107-C118, C124-C142, and C145-C160. N98 carries N-linked (GlcNAc...) asparagine glycosylation. 3 N-linked (GlcNAc...) asparagine glycosylation sites follow: N152, N165, and N178. A disulfide bridge connects residues C166 and C185. 2 Death domains span residues 198 to 269 and 270 to 365; these read DVTL…IVKK and IIQD…TQSL. An N-linked (GlcNAc...) asparagine glycan is attached at N289.

As to quaternary structure, homodimer. Interacts with TNFSF10 and TNFSF11. Post-translationally, N-glycosylated. Contains sialic acid residues. In terms of processing, the N-terminus is blocked. In terms of tissue distribution, highly expressed in adult lung, heart, kidney, liver, spleen, thymus, prostate, ovary, small intestine, thyroid, lymph node, trachea, adrenal gland, testis, and bone marrow. Detected at very low levels in brain, placenta and skeletal muscle. Highly expressed in fetal kidney, liver and lung.

The protein resides in the secreted. In terms of biological role, acts as a decoy receptor for TNFSF11/RANKL and thereby neutralizes its function in osteoclastogenesis. Inhibits the activation of osteoclasts and promotes osteoclast apoptosis in vitro. Bone homeostasis seems to depend on the local ratio between TNFSF11 and TNFRSF11B. May also play a role in preventing arterial calcification. May act as decoy receptor for TNFSF10/TRAIL and protect against apoptosis. TNFSF10/TRAIL binding blocks the inhibition of osteoclastogenesis. This chain is Tumor necrosis factor receptor superfamily member 11B (TNFRSF11B), found in Homo sapiens (Human).